Here is an 850-residue protein sequence, read N- to C-terminus: MQHLADGPITGPSAFLFPQIPIPAERPMAQSQPEVLDLPVLPLRDVVVFPHMVIPLFVGRDKSMRALEKAMEADKRILLVAQKSAETDDPAAVDLHTVGTLAQVLQLLKLPDGTIKVLVEGLSRVTVDKVVEQDGALQGQGTEVEASDAREPREVEAIARSLMSLFEQYVKTNRKLPPELLQTLAGIDEPGRLADTIAPHIGVRLADKQRLLEITDIGERLELLVGLVDGEIDVQQLEKRIRGRVKSQMEKSQREYYLNEQMKAIQKELGDLDDVPGELEELARKIAEAGMPKPVETKAKAELNKLKQMSPMSAEAAVVRNYLDWLLGVPWKKRTKVRKDLKVAEDTLDADHYGLDKVKERILEYLAVQSRVKQMKGPILCLVGPPGVGKTSLGQSIAKATNRKFVRMSLGGIRDEAEIRGHRRTYVGSMPGRLVQNLNKVGSKNPLFLLDEIDKMSMDFRGDPSSALLEVLDPEQNNSFNDHYLEVDLDLSEVMFVATSNSLNIPGPLLDRMEVIRIPGYTEDEKLNIAMRYLVPKQIKANGLKPEEIEIGGDAIQDIVRYYTRESGVRNLEREVAKICRKVVKEIALAGPQPAAKKAVAKKGKPKALVTVNAKNLDKYLGVRRFDFGRAEEENEIGLVTGLAWTEVGGELLQVESTLVPGKGNLILTGQLGNVMKESASAALSVVRSRAERLGIDVDFLQKQDVHVHVPDGATPKDGPSAGIAMVTSLVSVLTKVPIRADVAMTGEITLRGRVSAIGGLKEKLLAALRGGIRTVLIPGENRKDLADIPANVTRDLKIVPVKWIDEVLDLALERPLTPKKAGKEKARKTAPRVAVRGKSRSTPGTRVKH.

Residues 38–232 (LPVLPLRDVV…LLVGLVDGEI (195 aa)) form the Lon N-terminal domain. ATP is bound at residue 384-391 (GPPGVGKT). The Lon proteolytic domain occupies 634 to 815 (ENEIGLVTGL…DEVLDLALER (182 aa)). Active-site residues include serine 721 and lysine 764. The tract at residues 819-850 (PKKAGKEKARKTAPRVAVRGKSRSTPGTRVKH) is disordered. Residues 821 to 840 (KAGKEKARKTAPRVAVRGKS) are compositionally biased toward basic residues. A compositionally biased stretch (polar residues) spans 841–850 (RSTPGTRVKH).

This sequence belongs to the peptidase S16 family. Homohexamer. Organized in a ring with a central cavity.

The protein resides in the cytoplasm. It carries out the reaction Hydrolysis of proteins in presence of ATP.. Its function is as follows. ATP-dependent serine protease that mediates the selective degradation of mutant and abnormal proteins as well as certain short-lived regulatory proteins. Required for cellular homeostasis and for survival from DNA damage and developmental changes induced by stress. Degrades polypeptides processively to yield small peptide fragments that are 5 to 10 amino acids long. Binds to DNA in a double-stranded, site-specific manner. The chain is Lon protease from Xanthomonas oryzae pv. oryzae (strain KACC10331 / KXO85).